Reading from the N-terminus, the 934-residue chain is MARRSVLYFILLNALINKGQACFCDHYAWTQWTSCSKTCNSGTQSRHRQIVVDKYYQENFCEQICSKQETRECNWQRCPINCLLGDFGPWSDCDPCIEKQSKVRSVLRPSQFGGQPCTAPLVAFQPCIPSKLCKIEEADCKNKFRCDSGRCIARKLECNGENDCGDNSDERDCGRTKAVCTRKYNPIPSVQLMGNGFHFLAGEPRGEVLDNSFTGGICKTVKSSRTSNPYRVPANLENVGFEVQTAEDDLKTDFYKDLTSLGHNENQQGSFSSQGGSSFSVPIFYSSKRSENINHNSAFKQAIQASHKKDSSFIRIHKVMKVLNFTTKAKDLHLSDVFLKALNHLPLEYNSALYSRIFDDFGTHYFTSGSLGGVYDLLYQFSSEELKNSGLTEEEAKHCVRIETKKRVLFAKKTKVEHRCTTNKLSEKHEGSFIQGAEKSISLIRGGRSEYGAALAWEKGSSGLEEKTFSEWLESVKENPAVIDFELAPIVDLVRNIPCAVTKRNNLRKALQEYAAKFDPCQCAPCPNNGRPTLSGTECLCVCQSGTYGENCEKQSPDYKSNAVDGQWGCWSSWSTCDATYKRSRTRECNNPAPQRGGKRCEGEKRQEEDCTFSIMENNGQPCINDDEEMKEVDLPEIEADSGCPQPVPPENGFIRNEKQLYLVGEDVEISCLTGFETVGYQYFRCLPDGTWRQGDVECQRTECIKPVVQEVLTITPFQRLYRIGESIELTCPKGFVVAGPSRYTCQGNSWTPPISNSLTCEKDTLTKLKGHCQLGQKQSGSECICMSPEEDCSHHSEDLCVFDTDSNDYFTSPACKFLAEKCLNNQQLHFLHIGSCQDGRQLEWGLERTRLSSNSTKKESCGYDTCYDWEKCSASTSKCVCLLPPQCFKGGNQLYCVKMGSSTSEKTLNICEVGTIRCANRKMEILHPGKCLA.

The signal sequence occupies residues 1 to 21 (MARRSVLYFILLNALINKGQA). 11 disulfides stabilise this stretch: Cys-22-Cys-61, Cys-24-Cys-65, Cys-35-Cys-73, Cys-39-Cys-78, Cys-82-Cys-117, Cys-93-Cys-127, Cys-96-Cys-133, Cys-140-Cys-151, Cys-146-Cys-164, Cys-158-Cys-173, and Cys-180-Cys-218. 2 consecutive TSP type-1 domains span residues 22-79 (CFCD…QRCP) and 81-134 (NCLL…KLCK). Trp-29 carries C-linked (Man) tryptophan glycosylation. Residue Trp-32 is glycosylated (C-linked (Man) tryptophan; partial). A glycan (O-linked (Fuc...) threonine) is linked at Thr-38. C-linked (Man) tryptophan; partial glycosylation is present at Trp-90. One can recognise an LDL-receptor class A domain in the interval 138 to 175 (ADCKNKFRCDSGRCIARKLECNGENDCGDNSDERDCGR). Ca(2+)-binding residues include Leu-156, Asn-159, Glu-161, Asp-163, Asp-169, and Glu-170. Residues 176 to 522 (TKAVCTRKYN…EYAAKFDPCQ (347 aa)) form the MACPF domain. Residues 278 to 290 (SFSVPIFYSSKRS) traverse the membrane as a beta stranded segment. Residue Asn-324 is glycosylated (N-linked (GlcNAc...) asparagine). O-linked (Fuc...) threonine glycosylation is present at Thr-392. Cystine bridges form between Cys-399/Cys-420, Cys-499/Cys-623, Cys-521/Cys-570, Cys-523/Cys-539, Cys-526/Cys-541, Cys-543/Cys-552, Cys-577/Cys-611, Cys-589/Cys-601, Cys-644/Cys-686, Cys-672/Cys-699, Cys-704/Cys-746, Cys-732/Cys-761, Cys-773/Cys-823, Cys-784/Cys-801, Cys-786/Cys-837, and Cys-793/Cys-816. Residues 402-415 (IETKKRVLFAKKTK) form a beta stranded membrane-spanning segment. The 31-residue stretch at 523-553 (CAPCPNNGRPTLSGTECLCVCQSGTYGENCE) folds into the EGF-like domain. In terms of domain architecture, TSP type-1 3 spans 565–612 (DGQWGCWSSWSTCDATYKRSRTRECNNPAPQRGGKRCEGEKRQEEDCT). 3 C-linked (Man) tryptophan; partial glycosylation sites follow: Trp-568, Trp-571, and Trp-574. 2 CCP regions span residues 611-688 (CTFS…RCLP) and 689-765 (DGTW…EKDT). Sushi domains lie at 642–701 (SGCP…ECQR) and 702–763 (TECI…TCEK). The tract at residues 642–934 (SGCPQPVPPE…EILHPGKCLA (293 aa)) is C5b-binding domain. Residues 766–840 (LTKLKGHCQL…FLHIGSCQDG (75 aa)) form a factor I module (FIM) 1 region. The Kazal-like 1 domain occupies 780–839 (SGSECICMSPEEDCSHHSEDLCVFDTDSNDYFTSPACKFLAEKCLNNQQLHFLHIGSCQD). Asn-855 carries N-linked (GlcNAc...) asparagine glycosylation. The factor I module (FIM) 2 stretch occupies residues 858-934 (KKESCGYDTC…EILHPGKCLA (77 aa)). 5 cysteine pairs are disulfide-bonded: Cys-862–Cys-873, Cys-867–Cys-919, Cys-880–Cys-897, Cys-882–Cys-932, and Cys-888–Cys-912. Positions 876-934 (STSKCVCLLPPQCFKGGNQLYCVKMGSSTSEKTLNICEVGTIRCANRKMEILHPGKCLA) constitute a Kazal-like 2 domain.

Belongs to the complement C6/C7/C8/C9 family. Component of the membrane attack complex (MAC), composed of complement C5b, C6, C7, C8A, C8B, C8G and multiple copies of the pore-forming subunit C9. Post-translationally, all cysteine residues are assumed to be cross-linked to one another. Individual modules containing an even number of conserved cysteine residues are supposed to have disulfide linkages only within the same module.

It localises to the secreted. It is found in the target cell membrane. Its activity is regulated as follows. Membrane attack complex (MAC) assembly is inhibited by CD59, thereby protecting self-cells from damage during complement activation. MAC assembly is also inhibited by clusterin (CLU) chaperones that inhibit polymerization of C9. In terms of biological role, component of the membrane attack complex (MAC), a multiprotein complex activated by the complement cascade, which inserts into a target cell membrane and forms a pore, leading to target cell membrane rupture and cell lysis. The MAC is initiated by proteolytic cleavage of C5 into complement C5b in response to the classical, alternative, lectin and GZMK complement pathways. The complement pathways consist in a cascade of proteins that leads to phagocytosis and breakdown of pathogens and signaling that strengthens the adaptive immune system. Together with component C5b, involved in MAC complex assembly: complement C5b and C6 associate with the outer leaflet of target cell membrane, reducing the energy for membrane bending. The chain is Complement component C6 from Homo sapiens (Human).